The chain runs to 503 residues: UDP-N-acetylmuramoyl-L-alanyl-D-glutamate--2,6-diaminopimelate ligase (503 aa).

Ser-32 is a binding site for UDP-N-acetyl-alpha-D-muramoyl-L-alanyl-D-glutamate. 117-123 contacts ATP; it reads GTNGKTT. Residues 159 to 160, Ser-186, Gln-192, and Arg-194 contribute to the UDP-N-acetyl-alpha-D-muramoyl-L-alanyl-D-glutamate site; that span reads TT. Lys-226 carries the post-translational modification N6-carboxylysine. Meso-2,6-diaminopimelate contacts are provided by residues Arg-396, 420 to 423, Gly-471, and Glu-475; that span reads DNPR. The Meso-diaminopimelate recognition motif signature appears at 420-423; sequence DNPR.

This sequence belongs to the MurCDEF family. MurE subfamily. It depends on Mg(2+) as a cofactor. In terms of processing, carboxylation is probably crucial for Mg(2+) binding and, consequently, for the gamma-phosphate positioning of ATP.

The protein localises to the cytoplasm. The catalysed reaction is UDP-N-acetyl-alpha-D-muramoyl-L-alanyl-D-glutamate + meso-2,6-diaminopimelate + ATP = UDP-N-acetyl-alpha-D-muramoyl-L-alanyl-gamma-D-glutamyl-meso-2,6-diaminopimelate + ADP + phosphate + H(+). The protein operates within cell wall biogenesis; peptidoglycan biosynthesis. Catalyzes the addition of meso-diaminopimelic acid to the nucleotide precursor UDP-N-acetylmuramoyl-L-alanyl-D-glutamate (UMAG) in the biosynthesis of bacterial cell-wall peptidoglycan. The polypeptide is UDP-N-acetylmuramoyl-L-alanyl-D-glutamate--2,6-diaminopimelate ligase (Prochlorococcus marinus (strain SARG / CCMP1375 / SS120)).